Consider the following 354-residue polypeptide: Uptake hydrogenase small subunit (354 aa).

A signal peptide (tat-type signal) is located at residues 1-44 (MSQLETXYDVMRRQGITRRSFLKYCSLTGRPCLGPTFAPQIAHA). Positions 61, 64, 156, 190, 228, 231, 256, and 262 each coordinate [4Fe-4S] cluster. 3 residues coordinate [3Fe-4S] cluster: cysteine 271, cysteine 290, and cysteine 293.

This sequence belongs to the [NiFe]/[NiFeSe] hydrogenase small subunit family. In terms of assembly, heterodimer of a large and a small subunit. The cofactor is [4Fe-4S] cluster. [3Fe-4S] cluster serves as cofactor. Predicted to be exported by the Tat system. The position of the signal peptide cleavage has not been experimentally proven.

The protein localises to the cell membrane. It carries out the reaction H2 + A = AH2. In terms of biological role, this enzyme recycles the H(2) produced by nitrogenase to increase the production of ATP and to protect nitrogenase against inhibition or damage by O(2) under carbon- or phosphate-limited conditions. This Azotobacter chroococcum mcd 1 protein is Uptake hydrogenase small subunit (hupA).